A 393-amino-acid chain; its full sequence is Phosphopentomutase (393 aa).

Positions 15, 288, 293, 329, 330, and 341 each coordinate Mn(2+).

It belongs to the phosphopentomutase family. Requires Mn(2+) as cofactor.

The protein localises to the cytoplasm. The enzyme catalyses 2-deoxy-alpha-D-ribose 1-phosphate = 2-deoxy-D-ribose 5-phosphate. The catalysed reaction is alpha-D-ribose 1-phosphate = D-ribose 5-phosphate. Its pathway is carbohydrate degradation; 2-deoxy-D-ribose 1-phosphate degradation; D-glyceraldehyde 3-phosphate and acetaldehyde from 2-deoxy-alpha-D-ribose 1-phosphate: step 1/2. Isomerase that catalyzes the conversion of deoxy-ribose 1-phosphate (dRib-1-P) and ribose 1-phosphate (Rib-1-P) to deoxy-ribose 5-phosphate (dRib-5-P) and ribose 5-phosphate (Rib-5-P), respectively. In Halalkalibacterium halodurans (strain ATCC BAA-125 / DSM 18197 / FERM 7344 / JCM 9153 / C-125) (Bacillus halodurans), this protein is Phosphopentomutase.